The primary structure comprises 404 residues: MAQQGKVEPQDQDSFLDDQPGIRPIPSFDDMPLHQNLLRGIYSHGFEKPSSIQQRAIVPFTRGGDIIAQAQSGTGKTGAFSIGLLQRLDFRHNVLQGLVLSPTRELALQTAEVITRIGEFLAEGNSSFCATFVGGTRVQDDYRKLQAGSIVAVGTPGRVVDVTKRGAMRTEHLRVLVLDEADEMLSQGFAEQIYEIFRYLPKEIQVALFSATMPDDVLELTKKFMRDPTRILVKRESLTLEGIKQYFIAVEEEHKLDTLMDLYETVSIAQSVIFANTRRKVDWLAQQLNQSNHTVSCMHSEMPKQDREKVMSTFRNGSSRVLVTTDLVARGIDVHHVNIVINFDLPTNKESYLHRIGRGGRYGRKGVAINFVTQKDVEVLREIESHYHTQIDELPVDFAAYLGE.

The interval 1–28 (MAQQGKVEPQDQDSFLDDQPGIRPIPSF) is disordered. A Q motif motif is present at residues 26–54 (PSFDDMPLHQNLLRGIYSHGFEKPSSIQQ). Residues 57-231 (IVPFTRGGDI…KKFMRDPTRI (175 aa)) enclose the Helicase ATP-binding domain. ATP is bound at residue 70 to 77 (AQSGTGKT). The DEAD box motif lies at 179 to 182 (DEAD). One can recognise a Helicase C-terminal domain in the interval 242–402 (GIKQYFIAVE…ELPVDFAAYL (161 aa)).

The protein belongs to the DEAD box helicase family. eIF4A subfamily. As to quaternary structure, eIF4F is a multi-subunit complex, the composition of which varies with external and internal environmental conditions. It is composed of at least EIF4A, EIF4E and EIF4G.

It carries out the reaction ATP + H2O = ADP + phosphate + H(+). Its function is as follows. ATP-dependent RNA helicase which is a subunit of the eIF4F complex involved in cap recognition and is required for mRNA binding to ribosome. In the current model of translation initiation, eIF4A unwinds RNA secondary structures in the 5'-UTR of mRNAs which is necessary to allow efficient binding of the small ribosomal subunit, and subsequent scanning for the initiator codon. The protein is Probable eukaryotic initiation factor 4A of Trypanosoma cruzi (strain CL Brener).